A 39-amino-acid chain; its full sequence is B melanoma antigen 4 (39 aa).

Positions 1–17 (MAAGAVFLALSAQLLQA) are cleaved as a signal peptide.

This sequence belongs to the BAGE family. Not expressed in normal tissues except in testis. Expressed in melanoma, bladder and lung carcinomas.

It localises to the secreted. Its function is as follows. Unknown. Candidate gene encoding tumor antigens. The chain is B melanoma antigen 4 (BAGE4) from Homo sapiens (Human).